The following is a 461-amino-acid chain: B3 domain-containing protein REM9 (461 aa).

The segment at residues 11-103 (NQHFFQPLLP…VFHVTALGPS (93 aa)) is a DNA-binding region (TF-B3 1). The tract at residues 110 to 146 (PQSSRHEEGEESGENEISEKEGEENVQKESDKSSSDL) is disordered. Residues 126 to 143 (ISEKEGEENVQKESDKSS) are compositionally biased toward basic and acidic residues. DNA-binding regions (TF-B3) lie at residues 148 to 244 (CFSQ…CSRT) and 230 to 332 (LQKA…EQPS). The segment at 333-415 (FKAEDGRHKR…SGIEGNLQHT (83 aa)) is disordered. The segment covering 384–394 (PKVEIREKIAE) has biased composition (basic and acidic residues). The segment covering 400 to 415 (RASNKSSGIEGNLQHT) has biased composition (polar residues).

The protein localises to the nucleus. The chain is B3 domain-containing protein REM9 (REM9) from Arabidopsis thaliana (Mouse-ear cress).